We begin with the raw amino-acid sequence, 211 residues long: tRNA (pseudouridine(54)-N(1))-methyltransferase (211 aa).

Residues L128, G150, and C183 each coordinate S-adenosyl-L-methionine.

Belongs to the methyltransferase superfamily. TrmY family. Homodimer.

The protein resides in the cytoplasm. The enzyme catalyses pseudouridine(54) in tRNA + S-adenosyl-L-methionine = N(1)-methylpseudouridine(54) in tRNA + S-adenosyl-L-homocysteine + H(+). In terms of biological role, specifically catalyzes the N1-methylation of pseudouridine at position 54 (Psi54) in tRNAs. The sequence is that of tRNA (pseudouridine(54)-N(1))-methyltransferase from Methanosarcina mazei (strain ATCC BAA-159 / DSM 3647 / Goe1 / Go1 / JCM 11833 / OCM 88) (Methanosarcina frisia).